Reading from the N-terminus, the 351-residue chain is S-adenosylmethionine:tRNA ribosyltransferase-isomerase (351 aa).

The protein belongs to the QueA family. As to quaternary structure, monomer.

Its subcellular location is the cytoplasm. It catalyses the reaction 7-aminomethyl-7-carbaguanosine(34) in tRNA + S-adenosyl-L-methionine = epoxyqueuosine(34) in tRNA + adenine + L-methionine + 2 H(+). It participates in tRNA modification; tRNA-queuosine biosynthesis. Functionally, transfers and isomerizes the ribose moiety from AdoMet to the 7-aminomethyl group of 7-deazaguanine (preQ1-tRNA) to give epoxyqueuosine (oQ-tRNA). This chain is S-adenosylmethionine:tRNA ribosyltransferase-isomerase, found in Roseobacter denitrificans (strain ATCC 33942 / OCh 114) (Erythrobacter sp. (strain OCh 114)).